A 245-amino-acid chain; its full sequence is Uridylate kinase (245 aa).

Residue 12–15 (KISG) coordinates ATP. G55 is a UMP binding site. Positions 56 and 60 each coordinate ATP. UMP-binding positions include D76 and 137–144 (AGAPYLTT). ATP contacts are provided by T164, Y171, and D174.

This sequence belongs to the UMP kinase family. Homohexamer.

The protein resides in the cytoplasm. It carries out the reaction UMP + ATP = UDP + ADP. The protein operates within pyrimidine metabolism; CTP biosynthesis via de novo pathway; UDP from UMP (UMPK route): step 1/1. Inhibited by UTP. Its function is as follows. Catalyzes the reversible phosphorylation of UMP to UDP. This chain is Uridylate kinase, found in Chlamydia trachomatis serovar D (strain ATCC VR-885 / DSM 19411 / UW-3/Cx).